The primary structure comprises 498 residues: Hexokinase-1 (498 aa).

The helical transmembrane segment at 4–24 threads the bilayer; the sequence is AAVGAAVVCTAAVCAAAAVLV. In terms of domain architecture, Hexokinase spans 35–487; the sequence is GRVMAILKEL…SGIGAALLAA (453 aa). Residues 90–228 form a hexokinase small subdomain region; the sequence is TGDEHGLFYA…GVDMRVTALV (139 aa). Residues G104, T105, and N106 each coordinate ADP. The D-glucose site is built by T194, K195, N229, and D230. A hexokinase large subdomain region spans residues 229 to 476; it reads NDTVGTLAGG…ETIVIEHSND (248 aa). T253 contacts ADP. N256, E284, and E315 together coordinate D-glucose. Residue G441 coordinates ADP.

The protein belongs to the hexokinase family.

The protein resides in the plastid. It is found in the chloroplast outer membrane. The catalysed reaction is a D-hexose + ATP = a D-hexose 6-phosphate + ADP + H(+). It carries out the reaction D-fructose + ATP = D-fructose 6-phosphate + ADP + H(+). It catalyses the reaction D-glucose + ATP = D-glucose 6-phosphate + ADP + H(+). Its pathway is carbohydrate metabolism; hexose metabolism. It participates in carbohydrate degradation; glycolysis; D-glyceraldehyde 3-phosphate and glycerone phosphate from D-glucose: step 1/4. Fructose and glucose phosphorylating enzyme. The chain is Hexokinase-1 (HXK1) from Spinacia oleracea (Spinach).